The primary structure comprises 651 residues: Meiotic expression up-regulated protein 6 (651 aa).

2 stretches are compositionally biased toward basic and acidic residues: residues 1–12 and 21–30; these read MSYEGREERPEQ and VSEHNEHDSG. The segment at 1-102 is disordered; sequence MSYEGREERP…EKKSKKKAKD (102 aa). The span at 72-83 shows a compositional bias: acidic residues; the sequence is TVDNIDPADDDP. Positions 90–102 are enriched in basic and acidic residues; that stretch reads KVEEKKSKKKAKD. One can recognise a PH domain in the interval 194-261; sequence CRGLLFYSKS…WITDLKNAIA (68 aa). 3 disordered regions span residues 365-430, 468-514, and 587-630; these read TVEA…GTPI, VATP…KGGN, and TIKP…QMPQ. Polar residues-rich tracts occupy residues 410 to 429 and 478 to 490; these read ESTS…NGTP and PSTA…SVVS. Residues 497 to 514 are compositionally biased toward basic residues; the sequence is KKAGKKHHRHHKKKKGGN. Low complexity predominate over residues 587-604; the sequence is TIKPETPLTPTTTPTPRT.

This chain is Meiotic expression up-regulated protein 6 (meu6), found in Schizosaccharomyces pombe (strain 972 / ATCC 24843) (Fission yeast).